The chain runs to 338 residues: UDP-3-O-acylglucosamine N-acyltransferase (338 aa).

His251 acts as the Proton acceptor in catalysis.

This sequence belongs to the transferase hexapeptide repeat family. LpxD subfamily. In terms of assembly, homotrimer.

The enzyme catalyses a UDP-3-O-[(3R)-3-hydroxyacyl]-alpha-D-glucosamine + a (3R)-hydroxyacyl-[ACP] = a UDP-2-N,3-O-bis[(3R)-3-hydroxyacyl]-alpha-D-glucosamine + holo-[ACP] + H(+). It participates in bacterial outer membrane biogenesis; LPS lipid A biosynthesis. Functionally, catalyzes the N-acylation of UDP-3-O-acylglucosamine using 3-hydroxyacyl-ACP as the acyl donor. Is involved in the biosynthesis of lipid A, a phosphorylated glycolipid that anchors the lipopolysaccharide to the outer membrane of the cell. In Psychrobacter arcticus (strain DSM 17307 / VKM B-2377 / 273-4), this protein is UDP-3-O-acylglucosamine N-acyltransferase.